The following is a 907-amino-acid chain: Cytochrome b561, DM13 and DOMON domain-containing protein At5g54830 (907 aa).

The N-terminal stretch at 1–24 is a signal peptide; sequence MCDQRPNLLGSLVLLGFFIFFVNG. Positions 31-139 constitute a DM13 domain; that stretch reads SSLIGHESEF…ASDFGHVLLS (109 aa). A disordered region spans residues 144–172; it reads SDTSKAESPPSESNDVAPGKSNNSEPFKA. Over residues 153 to 168 the composition is skewed to polar residues; it reads PSESNDVAPGKSNNSE. DOMON domains lie at 184 to 329 and 524 to 645; these read DKYR…WALG and QQVK…WAMG. The region spanning 653-850 is the Cytochrome b561 domain; it reads LTERNMHSVT…CVVTVAYLEY (198 aa). Residues 685-705 form a helical membrane-spanning segment; sequence VLGVHGFMMFLAWGILLPGGI. Heme b contacts are provided by His689 and His723. The next 4 helical transmembrane spans lie at 730–750, 754–774, 795–815, and 829–849; these read GLAI…GFSF, HVKF…NAWL, SHSI…FTGM, and GLNL…AYLE. Heme b is bound by residues His754 and His796. The span at 884 to 897 shows a compositional bias: basic and acidic residues; sequence GGFRDKDDEDRNGG. Positions 884-907 are disordered; it reads GGFRDKDDEDRNGGRMEIQLEPLK.

The cofactor is heme b.

It is found in the membrane. Functionally, may act as a catecholamine-responsive trans-membrane electron transporter. The sequence is that of Cytochrome b561, DM13 and DOMON domain-containing protein At5g54830 from Arabidopsis thaliana (Mouse-ear cress).